The following is a 950-amino-acid chain: Voltage-gated inwardly rectifying potassium channel KCNH6 (950 aa).

Residues 1-261 (MPVRRGHVAP…YSPFKAVWDW (261 aa)) lie on the Cytoplasmic side of the membrane. Residues 41–70 (IIYCNDGFCELFGYSRVEVMQRPCTCDFLT) enclose the PAS domain. Positions 92–144 (CKVDILYYRKDASSFRCLVDVVPVKNEDGAVIMFILNFEDLAQLLAKSSSRSL) constitute a PAC domain. The tract at residues 154-174 (LGSEGSHSRPSGQGPGPGRGK) is disordered. Residues 262-282 (LILLLVIYTAVFTPYSAAFLL) traverse the membrane as a helical segment. The Extracellular portion of the chain corresponds to 283–298 (SDQDESQRGTCGYTCS). The chain crosses the membrane as a helical span at residues 299 to 319 (PLTVVDLIVDIMFVVDIVINF). Residues 320-340 (RTTYVNTNDEVVSHPRRIAVH) lie on the Cytoplasmic side of the membrane. A helical membrane pass occupies residues 341 to 361 (YFKGWFLIDMVAAIPFDLLIF). Residues 362–370 (RTGSDETTT) are Extracellular-facing. Residues 371–391 (LIGLLKTARLLRLVRVARKLD) traverse the membrane as a helical; Voltage-sensor segment. The Cytoplasmic segment spans residues 392–398 (RYSEYGA). Residues 399-419 (AVLFLLMCTFALIAHWLACIW) traverse the membrane as a helical segment. Over 420-463 (YAIGNVERPYLEPKIGWLDSLGAQLGKQYNGSDPASGPSVQDKY) the chain is Extracellular. The pore-forming intramembrane region spans 464-484 (VTALYFTFSSLTSVGFGNVSP). The Selectivity filter signature appears at 476–481 (SVGFGN). Residues 485-490 (NTNSEK) lie on the Extracellular side of the membrane. The helical transmembrane segment at 491-511 (VFSICVMLIGSLMYASIFGNV) threads the bilayer. At 512–950 (SAIIQRLYSG…HGSDPGFTRS (439 aa)) the chain is on the cytoplasmic side. The segment at 594 to 694 (AFRGASKGCL…IHRADLLEVL (101 aa)) is cNMP-binding domain. Disordered regions lie at residues 719–750 (GGLQ…APSL) and 890–950 (VPSS…FTRS). Residues 740–750 (NDSQSGAAPSL) show a composition bias toward polar residues. A compositionally biased stretch (low complexity) spans 898–912 (PGGLLSPLASPLRPL).

This sequence belongs to the potassium channel family. H (Eag) (TC 1.A.1.20) subfamily. Kv11.2/KCNH6 sub-subfamily. In terms of assembly, the potassium channel is probably composed of a homo- or heterotetrameric complex of pore-forming alpha subunits that can associate only within their subfamily. In terms of tissue distribution, highly expressed in celiac and superior mesenteric ganglia, but not detected in brain or in heart. Detected at low levels in retina. Also found in pituitary. Also found in the olfactory bulb (granular and mitral cell layers).

The protein resides in the cell membrane. The enzyme catalyses K(+)(in) = K(+)(out). Pore-forming (alpha) subunit of voltage-gated inwardly rectifying potassium channel. Characterized by unusual gating kinetics by producing relatively small outward currents during membrane depolarization and large inward currents during subsequent repolarization which reflect a rapid inactivation during depolarization and quick recovery from inactivation but slow deactivation (closing) during repolarization. Activates even more slowly than KCNH2. This Rattus norvegicus (Rat) protein is Voltage-gated inwardly rectifying potassium channel KCNH6.